Here is a 382-residue protein sequence, read N- to C-terminus: 3-hydroxyisobutyryl-CoA hydrolase, mitochondrial (382 aa).

Residues E117, G142, E165, and D173 each contribute to the substrate site.

It belongs to the enoyl-CoA hydratase/isomerase family.

The protein localises to the mitochondrion. The enzyme catalyses 3-hydroxy-2-methylpropanoyl-CoA + H2O = 3-hydroxy-2-methylpropanoate + CoA + H(+). Its pathway is amino-acid degradation; L-valine degradation. Hydrolyzes 3-hydroxyisobutyryl-CoA (HIBYL-CoA), a saline catabolite. Has high activity toward isobutyryl-CoA. Could be an isobutyryl-CoA dehydrogenase that functions in valine catabolism. Also hydrolyzes 3-hydroxypropanoyl-CoA. The sequence is that of 3-hydroxyisobutyryl-CoA hydrolase, mitochondrial (hibch) from Danio rerio (Zebrafish).